Here is a 602-residue protein sequence, read N- to C-terminus: Cholinesterase (602 aa).

The signal sequence occupies residues 1-28; the sequence is MHSKVTIICIRFLFWFLLLCMLIGKSHT. Residues Asn-45 and Asn-85 are each glycosylated (N-linked (GlcNAc...) (complex) asparagine). An intrachain disulfide couples Cys-93 to Cys-120. Trp-110 serves as a coordination point for tacrine. The N-linked (GlcNAc...) (complex) asparagine glycan is linked to Asn-134. 144 to 145 contacts substrate; the sequence is GG. Ser-226 serves as the catalytic Acyl-ester intermediate. At Ser-226 the chain carries Phosphoserine. 2 N-linked (GlcNAc...) (complex) asparagine glycosylation sites follow: Asn-269 and Asn-284. Cysteines 280 and 291 form a disulfide. Glu-353 (charge relay system) is an active-site residue. Residue Asn-369 is glycosylated (N-linked (GlcNAc...) (complex) asparagine). Cys-428 and Cys-547 are disulfide-bonded. Residue His-466 coordinates tacrine. His-466 acts as the Charge relay system in catalysis. A glycan (N-linked (GlcNAc...) (complex) asparagine) is linked at Asn-483. N-linked (GlcNAc...) asparagine glycosylation is found at Asn-509, Asn-513, and Asn-514.

Belongs to the type-B carboxylesterase/lipase family. Homotetramer; disulfide-linked. Dimer of dimers. N-glycosylated. No other PTM detected. The major N-glycan structures are of the complex diantennary type with 1 and 2 N-acetylneuraminic acid molecules (Neu5Ac) making up approximately 33% and 47% of the total N-glycans, respectively. Only low amounts of fucosylated diantennary N-glycans are detected (approximately 2%). Triantennary N-glycans with or without fucose amount to approximately 13%, whereas 5% of the total N-glycans are of the oligomannosidic or hybrid type. In terms of tissue distribution, detected in blood plasma (at protein level). Present in most cells except erythrocytes.

It is found in the secreted. The enzyme catalyses an acylcholine + H2O = a carboxylate + choline + H(+). Its activity is regulated as follows. Inhibited by mercury. Inhibited by Tabun. Tabun forms a covalent adduct with Ser-226 that becomes irreversible upon aging. In terms of biological role, esterase with broad substrate specificity. Contributes to the inactivation of the neurotransmitter acetylcholine. Can degrade neurotoxic organophosphate esters. The protein is Cholinesterase (BCHE) of Homo sapiens (Human).